The chain runs to 88 residues: Large ribosomal subunit protein bL31 (88 aa).

The segment at 67 to 88 is disordered; the sequence is MGSVDNATSEKKSATDETSKES. The span at 74–88 shows a compositional bias: basic and acidic residues; that stretch reads TSEKKSATDETSKES.

This sequence belongs to the bacterial ribosomal protein bL31 family. Type A subfamily. Part of the 50S ribosomal subunit.

Functionally, binds the 23S rRNA. This is Large ribosomal subunit protein bL31 from Synechococcus sp. (strain CC9311).